Here is a 162-residue protein sequence, read N- to C-terminus: Protein-export protein SecB 2 (162 aa).

This sequence belongs to the SecB family. In terms of assembly, homotetramer, a dimer of dimers. One homotetramer interacts with 1 SecA dimer.

It is found in the cytoplasm. One of the proteins required for the normal export of preproteins out of the cell cytoplasm. It is a molecular chaperone that binds to a subset of precursor proteins, maintaining them in a translocation-competent state. It also specifically binds to its receptor SecA. The sequence is that of Protein-export protein SecB 2 from Polaromonas naphthalenivorans (strain CJ2).